The sequence spans 348 residues: UDP-3-O-acylglucosamine N-acyltransferase (348 aa).

H257 (proton acceptor) is an active-site residue.

Belongs to the transferase hexapeptide repeat family. LpxD subfamily. As to quaternary structure, homotrimer.

It carries out the reaction a UDP-3-O-[(3R)-3-hydroxyacyl]-alpha-D-glucosamine + a (3R)-hydroxyacyl-[ACP] = a UDP-2-N,3-O-bis[(3R)-3-hydroxyacyl]-alpha-D-glucosamine + holo-[ACP] + H(+). It functions in the pathway bacterial outer membrane biogenesis; LPS lipid A biosynthesis. Its function is as follows. Catalyzes the N-acylation of UDP-3-O-acylglucosamine using 3-hydroxyacyl-ACP as the acyl donor. Is involved in the biosynthesis of lipid A, a phosphorylated glycolipid that anchors the lipopolysaccharide to the outer membrane of the cell. In Bartonella henselae (strain ATCC 49882 / DSM 28221 / CCUG 30454 / Houston 1) (Rochalimaea henselae), this protein is UDP-3-O-acylglucosamine N-acyltransferase.